Consider the following 385-residue polypeptide: MNNLILVKYASEIFLKGLNKNKFERKLKENIRKKLKDIDHEFITDQNRWFIKSEDLDGVIERVKKVFGVKELCLVTQVTGDFNSIKEEGLKKIKESKAKSFKVETNRANKKFPMNSMEVSRAVGGYILSELGDEIEVDIHNPECKLYVEIRGNAYVFTDKDKIKAVGGLPYGMNGSTMVMLSGGIDSPVAAYLMARRGVETHCVYYHSHPYTSERAKDKVKELAKIVGRYTEKITLYVVPFTEIQMDIIEKCREDELTIIMRRFMMRVACELSERKKIQSITTGESIGQVASQTMEGLMVSNDVSDRPVFRPLIAMDKEDIMDIARDIDTYDTSILPYEDCCTIFVPKHPKTKPRVKDMIIAERKLDIEALVNKAIDEMETFIFE.

Residues 57 to 160 (DGVIERVKKV…RGNAYVFTDK (104 aa)) form the THUMP domain. Residues 180-181 (ML), 205-206 (YY), Arg262, Gly284, and Gln293 contribute to the ATP site.

Belongs to the ThiI family.

The protein localises to the cytoplasm. It catalyses the reaction [ThiI sulfur-carrier protein]-S-sulfanyl-L-cysteine + a uridine in tRNA + 2 reduced [2Fe-2S]-[ferredoxin] + ATP + H(+) = [ThiI sulfur-carrier protein]-L-cysteine + a 4-thiouridine in tRNA + 2 oxidized [2Fe-2S]-[ferredoxin] + AMP + diphosphate. It carries out the reaction [ThiS sulfur-carrier protein]-C-terminal Gly-Gly-AMP + S-sulfanyl-L-cysteinyl-[cysteine desulfurase] + AH2 = [ThiS sulfur-carrier protein]-C-terminal-Gly-aminoethanethioate + L-cysteinyl-[cysteine desulfurase] + A + AMP + 2 H(+). The protein operates within cofactor biosynthesis; thiamine diphosphate biosynthesis. Functionally, catalyzes the ATP-dependent transfer of a sulfur to tRNA to produce 4-thiouridine in position 8 of tRNAs, which functions as a near-UV photosensor. Also catalyzes the transfer of sulfur to the sulfur carrier protein ThiS, forming ThiS-thiocarboxylate. This is a step in the synthesis of thiazole, in the thiamine biosynthesis pathway. The sulfur is donated as persulfide by IscS. This is Probable tRNA sulfurtransferase from Clostridium perfringens (strain SM101 / Type A).